Reading from the N-terminus, the 632-residue chain is Tetratricopeptide repeat protein 39B (632 aa).

3 TPR repeats span residues 343–376, 535–568, and 576–609; these read SLVL…QEEW, CLVK…EKLL, and PFTL…YKDY.

The protein belongs to the TTC39 family.

In terms of biological role, regulates high density lipoprotein (HDL) cholesterol metabolism by promoting the ubiquitination and degradation of the oxysterols receptors LXR (NR1H2 and NR1H3). The sequence is that of Tetratricopeptide repeat protein 39B (TTC39B) from Macaca fascicularis (Crab-eating macaque).